We begin with the raw amino-acid sequence, 63 residues long: Protein DsrB (63 aa).

Belongs to the DsrB family.

This Yersinia pseudotuberculosis serotype O:3 (strain YPIII) protein is Protein DsrB.